Here is a 942-residue protein sequence, read N- to C-terminus: Calcium-activated chloride channel regulator 2 (942 aa).

The signal sequence occupies residues 1–32 (MTHRDSTGPVIGLKLVTLLFTLSPELLFLGAG). Residues 33–905 (LKLKENGYDG…SRDDLILKGV (873 aa)) are Extracellular-facing. Residues 54 to 205 (DLKLITNIKE…CSSDITGVFV (152 aa)) form a metalloprotease domain region. N-linked (GlcNAc...) asparagine glycosylation is found at Asn-74 and Asn-97. A Zn(2+)-binding site is contributed by His-164. The active site involves Glu-165. Zn(2+) contacts are provided by His-168 and Asp-175. N-linked (GlcNAc...) asparagine glycans are attached at residues Asn-231, Asn-235, Asn-254, and Asn-286. Residues 311 to 483 (VVCLVIDVSR…NGMTEAFVRI (173 aa)) enclose the VWFA domain. N-linked (GlcNAc...) asparagine glycans are attached at residues Asn-522, Asn-580, Asn-637, and Asn-821. Residues 906–926 (LTTVGLIAILCLIMVVAHCIF) form a helical membrane-spanning segment. Residues 927–942 (NRKKRPSRKENETKFL) lie on the Cytoplasmic side of the membrane.

It belongs to the CLCR family. In terms of processing, the translation product is autoproteolytically cleaved by the metalloprotease domain in the endoplasmic reticulum into a N-terminal and a C-terminal products that remain physically associated with each other. The cleavage is necessary for calcium-activated chloride channel (CaCC) activation activity. N-glycosylated. Highly expressed in eye, spleen, lung, kidney, uterus, and endothelial cells. Weakly expressed in heart and throughout the gastrointestinal tract. Highly expressed in mammary cell lines. Its expression in immortalized cell line HC11 correlates with slow or arrested growth. Re-expression in mammary tumor cells reduces colony survival.

It localises to the cell membrane. The protein localises to the basal cell membrane. The protein resides in the cell junction. Plays a role in modulating chloride current across the plasma membrane in a calcium-dependent manner, and cell adhesion. Involved in basal cell adhesion and/or stratification of squamous epithelia. May act as a tumor suppressor in breast and colorectal cancer. Plays a key role for cell adhesion in the beginning stages of lung metastasis via the binding to ITGB4. This chain is Calcium-activated chloride channel regulator 2 (Clca2), found in Mus musculus (Mouse).